The sequence spans 143 residues: Large ribosomal subunit protein uL13c (143 aa).

Belongs to the universal ribosomal protein uL13 family. Part of the 50S ribosomal subunit.

It localises to the plastid. Its subcellular location is the chloroplast. This chain is Large ribosomal subunit protein uL13c, found in Guillardia theta (Cryptophyte).